The sequence spans 204 residues: Small ribosomal subunit protein uS4 (204 aa).

One can recognise an S4 RNA-binding domain in the interval 95–157; the sequence is RRLDNTVFRM…KGIHSIIRHN (63 aa).

This sequence belongs to the universal ribosomal protein uS4 family. In terms of assembly, part of the 30S ribosomal subunit. Contacts protein S5. The interaction surface between S4 and S5 is involved in control of translational fidelity.

Functionally, one of the primary rRNA binding proteins, it binds directly to 16S rRNA where it nucleates assembly of the body of the 30S subunit. Its function is as follows. With S5 and S12 plays an important role in translational accuracy. This is Small ribosomal subunit protein uS4 from Treponema pallidum (strain Nichols).